Consider the following 565-residue polypeptide: Salicyl-AMP ligase / salicyl-S-ArCP synthetase (565 aa).

6 residues coordinate ATP: Gly214, Gly330, Val352, Asp436, Arg451, and Lys542.

Belongs to the ATP-dependent AMP-binding enzyme family.

The enzyme catalyses salicylate + ATP + H(+) = 2-hydroxybenzoyl-5'-AMP + diphosphate. It catalyses the reaction 2-hydroxybenzoyl-5'-AMP + holo-[ACP] = salicyl-[ACP] + AMP + H(+). It functions in the pathway siderophore biosynthesis; mycobactin biosynthesis. With respect to regulation, inhibited by salicyl-AMS, an acyl-AMP analog. Also inhibited by 5'-O-[(N-acyl)sulfamoyl]adenosines. Its function is as follows. Involved in the initial steps of the mycobactin biosynthetic pathway. Catalyzes the salicylation of the aryl carrier protein (ArCP) domain of MbtB through a two-step reaction. The first step is the ATP-dependent adenylation of salicylate to generate a salicyl-AMP intermediate. The second step is the transfer of this activated salicylate to MbtB to form a salicyl-ArCP domain thioester. The sequence is that of Salicyl-AMP ligase / salicyl-S-ArCP synthetase from Mycobacterium tuberculosis (strain ATCC 25618 / H37Rv).